Here is a 379-residue protein sequence, read N- to C-terminus: uncharacterized protein (379 aa).

ATP is bound at residue 29–36; the sequence is GPLNSGKT.

Belongs to the archaeal ATPase family.

This is an uncharacterized protein from Methanocaldococcus jannaschii (strain ATCC 43067 / DSM 2661 / JAL-1 / JCM 10045 / NBRC 100440) (Methanococcus jannaschii).